A 438-amino-acid polypeptide reads, in one-letter code: Coenzyme A disulfide reductase (438 aa).

8 to 33 (GAVAGGATCASQIRRLDKESDIIIFE) is a binding site for FAD. Residues Thr-15, Gln-19, Arg-22, Ser-39, and Asn-42 each coordinate substrate. The Nucleophile role is filled by Cys-43. The active-site Redox-active is Cys-43. Lys-71 serves as a coordination point for substrate. 151–166 (VLVVGAGYVSLEVLEN) provides a ligand contact to NADP(+). An FAD-binding site is contributed by 267 to 277 (TNVPNIYVIGD). His-299 contributes to the substrate binding site. Tyr-419 provides a ligand contact to FAD. Lys-427 is a substrate binding site.

This sequence belongs to the class-III pyridine nucleotide-disulfide oxidoreductase family. Homodimer. FAD serves as cofactor.

It catalyses the reaction NADP(+) + 2 CoA = CoA-disulfide + NADPH + H(+). In terms of biological role, catalyzes specifically the NADPH-dependent reduction of coenzyme A disulfide. This Staphylococcus aureus (strain MRSA252) protein is Coenzyme A disulfide reductase.